The sequence spans 254 residues: Phycobilisome rod-core linker polypeptide CpcG3 (254 aa).

In terms of domain architecture, PBS-linker spans 11–191; that stretch reads SSQNHRVKSF…DFQETAGTVK (181 aa).

The protein belongs to the phycobilisome linker protein family. In terms of assembly, the phycobilisome is a hemidiscoidal structure that is composed of two distinct substructures: a core complex and a number of rods radiating from the core.

Its subcellular location is the cellular thylakoid membrane. In terms of biological role, rod-core linker protein required for attachment of phycocyanin to allophycocyanin in cores of phycobilisomes. Functionally, linker polypeptides determine the state of aggregation and the location of the disk-shaped phycobiliprotein units within the phycobilisome and modulate their spectroscopic properties in order to mediate a directed and optimal energy transfer. The polypeptide is Phycobilisome rod-core linker polypeptide CpcG3 (cpcG3) (Mastigocladus laminosus (Fischerella sp.)).